A 212-amino-acid chain; its full sequence is Orotate phosphoribosyltransferase (212 aa).

Lys-26 contacts 5-phospho-alpha-D-ribose 1-diphosphate. 34–35 serves as a coordination point for orotate; sequence FF. 5-phospho-alpha-D-ribose 1-diphosphate is bound by residues 72–73, Arg-99, Lys-100, Lys-103, His-105, and 124–132; these read YK and DDVITVGTA. Orotate-binding residues include Thr-128 and Arg-156.

Belongs to the purine/pyrimidine phosphoribosyltransferase family. PyrE subfamily. Homodimer. Mg(2+) is required as a cofactor.

The enzyme catalyses orotidine 5'-phosphate + diphosphate = orotate + 5-phospho-alpha-D-ribose 1-diphosphate. It functions in the pathway pyrimidine metabolism; UMP biosynthesis via de novo pathway; UMP from orotate: step 1/2. In terms of biological role, catalyzes the transfer of a ribosyl phosphate group from 5-phosphoribose 1-diphosphate to orotate, leading to the formation of orotidine monophosphate (OMP). The protein is Orotate phosphoribosyltransferase of Ruthia magnifica subsp. Calyptogena magnifica.